The following is a 158-amino-acid chain: Phosphopantetheine adenylyltransferase (158 aa).

Ser8 contacts substrate. ATP-binding positions include 8–9 (SF) and His16. Residues Lys40, Thr72, and Arg86 each coordinate substrate. Residues 87 to 89 (GLR), Glu97, and 122 to 128 (HSFLSSS) contribute to the ATP site.

It belongs to the bacterial CoaD family. In terms of assembly, homohexamer. The cofactor is Mg(2+).

It localises to the cytoplasm. The catalysed reaction is (R)-4'-phosphopantetheine + ATP + H(+) = 3'-dephospho-CoA + diphosphate. It participates in cofactor biosynthesis; coenzyme A biosynthesis; CoA from (R)-pantothenate: step 4/5. Functionally, reversibly transfers an adenylyl group from ATP to 4'-phosphopantetheine, yielding dephospho-CoA (dPCoA) and pyrophosphate. In Prochlorococcus marinus (strain NATL2A), this protein is Phosphopantetheine adenylyltransferase.